We begin with the raw amino-acid sequence, 222 residues long: Flagellar L-ring protein (222 aa).

The N-terminal stretch at 1 to 18 (MRRPGAAALAAAALALAG) is a signal peptide. Residue cysteine 19 is the site of N-palmitoyl cysteine attachment. Cysteine 19 carries the S-diacylglycerol cysteine lipid modification.

This sequence belongs to the FlgH family. As to quaternary structure, the basal body constitutes a major portion of the flagellar organelle and consists of four rings (L,P,S, and M) mounted on a central rod.

The protein localises to the cell outer membrane. It is found in the bacterial flagellum basal body. In terms of biological role, assembles around the rod to form the L-ring and probably protects the motor/basal body from shearing forces during rotation. This is Flagellar L-ring protein from Burkholderia mallei (strain ATCC 23344).